The following is a 135-amino-acid chain: S-protein homolog 7 (135 aa).

An N-terminal signal peptide occupies residues 1–20; sequence MNNLFVLVIIIVLSAGSNNG.

It belongs to the plant self-incompatibility (S1) protein family.

The protein localises to the secreted. The protein is S-protein homolog 7 of Arabidopsis thaliana (Mouse-ear cress).